Reading from the N-terminus, the 20-residue chain is Short cationic peptide-4b (20 aa).

The residue at position 20 (Glu20) is a Glutamic acid 1-amide.

In terms of tissue distribution, expressed by the venom gland.

It localises to the secreted. This is Short cationic peptide-4b from Cupiennius salei (American wandering spider).